Reading from the N-terminus, the 353-residue chain is Bone morphogenetic protein 2 (353 aa).

Residues 1–239 constitute a propeptide that is removed on maturation; sequence GSLKRPEDLL…GHPLHKREKR (239 aa). N-linked (GlcNAc...) asparagine glycosylation is found at Asn-91, Asn-121, and Asn-157. The segment at 228-248 is disordered; the sequence is GKGHPLHKREKRQAKHKQRKR. Basic residues predominate over residues 231–248; that stretch reads HPLHKREKRQAKHKQRKR. 3 disulfides stabilise this stretch: Cys-253/Cys-318, Cys-282/Cys-350, and Cys-286/Cys-352. A glycan (N-linked (GlcNAc...) asparagine) is linked at Asn-295.

This sequence belongs to the TGF-beta family. Homodimer; disulfide-linked.

It localises to the secreted. Its function is as follows. Negatively regulates the structure and function of the limb apical ectodermal ridge. The sequence is that of Bone morphogenetic protein 2 (BMP2) from Gallus gallus (Chicken).